A 110-amino-acid chain; its full sequence is uncharacterized protein (110 aa).

It belongs to the HesB/IscA family.

This is an uncharacterized protein from Rickettsia prowazekii (strain Madrid E).